A 566-amino-acid polypeptide reads, in one-letter code: MGSAAMDTKKKKEVSSPGGSSGKKNPSLKRRSLRVHIPDLSSFAMPLLDGDVENSEKHSSRKVDSPFSSGSPSRGLFSRGPQPRPSSPVSAPVRPKTSPGSPKTVFPFSYQESPPRSPRRMSFSGIFRSSSKESSPNSNPSTSPGGIRFFSRSRKTSSVSSSPSTPTQVTKQHPFPLESYKQEPERPESRIYASSSPPDTGQRFCLAFQSPARPPLASPTYHAPLRTAVLAAAPGPAEAGMLEKLEFQEEEDSESGVYMRFMRSHKCYDIVPTSSKLVVFDTTLQVKKAFFALVANGVRAAPLWESKKQSFVGMLTITDFINILHRYYKSPMVQIYELEEHKIETWRELYLQETFKPLVNISPDASLFDAVYSLIKNKIHRLPVIDPISGNALYILTHKRILKFLQLFMSDMPKPAFMKQNLDELGIGTYHNIAFIHPDTPIIKALNIFVERRISALPVVDESGKVVDIYSKFDVINLAAEKTYNNLDITVTQALQHRSQYFEGVVKCSKLETLETIVDRIVRAEVHRLVVVNEADSIVGIISLSDILQALILTPAGAKQKETETE.

The segment at Met1–Pro198 is disordered. Low complexity predominate over residues Ser15–Asn25. Residues Asn54–Asp64 show a composition bias toward basic and acidic residues. Residues Ser65, Ser71, Ser73, Ser90, Ser138, Ser143, Ser158, Ser161, and Ser162 each carry the phosphoserine modification. 2 stretches are compositionally biased toward low complexity: residues Lys132–Pro144 and Thr156–Gln172. Thr165 carries the phosphothreonine modification. A compositionally biased stretch (basic and acidic residues) spans Tyr180–Ser189. At Ser196 the chain carries Phosphoserine. CBS domains follow at residues Pro272–Met332, Thr354–Met412, and Ile427–Ile489. Residues Arg299, Met314 to Asp319, Val359, His380 to Arg381, and Lys399 each bind ADP. AMP-binding positions include Arg299, Met314 to Asp319, Val359, His380, His380 to Arg381, Lys399, Thr429, Ala434, Ser455 to Ala456, Ser471 to Asp474, Arg498, His527, His527 to Arg528, and Ser543 to Asp546. Residues Arg299, Met314 to Asp319, Val359, His380 to Arg381, Arg381, and Lys399 contribute to the ATP site. An AMPK pseudosubstrate motif is present at residues Leu367–Ile388. ADP-binding positions include Ser471 to Asp474, Arg498, and His527 to Arg528. Residues Ser471–Asp474, Arg498, and His527–Arg528 each bind ATP. One can recognise a CBS 4 domain in the interval Tyr501 to Lys559.

The protein belongs to the 5'-AMP-activated protein kinase gamma subunit family. AMPK is a heterotrimer of an alpha catalytic subunit (PRKAA1 or PRKAA2), a beta (PRKAB1 or PRKAB2) and a gamma non-catalytic subunits (PRKAG1, PRKAG2 or PRKAG3). Interacts with FNIP1 and FNIP2. In terms of processing, phosphorylated by ULK1; leading to negatively regulate AMPK activity and suggesting the existence of a regulatory feedback loop between ULK1 and AMPK. Glycosylated; O-GlcNAcylated by OGT, promoting the AMP-activated protein kinase (AMPK) activity.

Functionally, AMP/ATP-binding subunit of AMP-activated protein kinase (AMPK), an energy sensor protein kinase that plays a key role in regulating cellular energy metabolism. In response to reduction of intracellular ATP levels, AMPK activates energy-producing pathways and inhibits energy-consuming processes: inhibits protein, carbohydrate and lipid biosynthesis, as well as cell growth and proliferation. AMPK acts via direct phosphorylation of metabolic enzymes, and by longer-term effects via phosphorylation of transcription regulators. Also acts as a regulator of cellular polarity by remodeling the actin cytoskeleton; probably by indirectly activating myosin. Gamma non-catalytic subunit mediates binding to AMP, ADP and ATP, leading to activate or inhibit AMPK: AMP-binding results in allosteric activation of alpha catalytic subunit (PRKAA1 or PRKAA2) both by inducing phosphorylation and preventing dephosphorylation of catalytic subunits. ADP also stimulates phosphorylation, without stimulating already phosphorylated catalytic subunit. ATP promotes dephosphorylation of catalytic subunit, rendering the AMPK enzyme inactive. This Mus musculus (Mouse) protein is 5'-AMP-activated protein kinase subunit gamma-2 (Prkag2).